We begin with the raw amino-acid sequence, 203 residues long: Outer-membrane lipoprotein LolB (203 aa).

A signal peptide spans 1-20 (MNRSRRLALLCLGVPLLLQA). A lipid anchor (N-palmitoyl cysteine) is attached at Cys-21. Cys-21 is lipidated: S-diacylglycerol cysteine.

Belongs to the LolB family. Monomer.

It localises to the cell outer membrane. Its function is as follows. Plays a critical role in the incorporation of lipoproteins in the outer membrane after they are released by the LolA protein. This is Outer-membrane lipoprotein LolB from Cupriavidus taiwanensis (strain DSM 17343 / BCRC 17206 / CCUG 44338 / CIP 107171 / LMG 19424 / R1) (Ralstonia taiwanensis (strain LMG 19424)).